An 874-amino-acid polypeptide reads, in one-letter code: Alanine--tRNA ligase (874 aa).

Zn(2+) contacts are provided by His562, His566, Cys665, and His669.

It belongs to the class-II aminoacyl-tRNA synthetase family. It depends on Zn(2+) as a cofactor.

The protein resides in the cytoplasm. It carries out the reaction tRNA(Ala) + L-alanine + ATP = L-alanyl-tRNA(Ala) + AMP + diphosphate. In terms of biological role, catalyzes the attachment of alanine to tRNA(Ala) in a two-step reaction: alanine is first activated by ATP to form Ala-AMP and then transferred to the acceptor end of tRNA(Ala). Also edits incorrectly charged Ser-tRNA(Ala) and Gly-tRNA(Ala) via its editing domain. This is Alanine--tRNA ligase from Pseudomonas savastanoi pv. phaseolicola (strain 1448A / Race 6) (Pseudomonas syringae pv. phaseolicola (strain 1448A / Race 6)).